A 60-amino-acid polypeptide reads, in one-letter code: Small, acid-soluble spore protein H (60 aa).

Belongs to the SspH family.

It is found in the spore core. This chain is Small, acid-soluble spore protein H, found in Halalkalibacterium halodurans (strain ATCC BAA-125 / DSM 18197 / FERM 7344 / JCM 9153 / C-125) (Bacillus halodurans).